The sequence spans 165 residues: MSNRSRSTLLTISFFVLIDWVTKLAVLLYRGNLPNANPILYQYSWGKLFFCICPTFNEGAAFGLFSKYKYFLLLIRIVIILGILAFLFLRKKKTSATTRFSLILLCSGAIGNVGDIFFYNHVIDFISIGYNRWSFPTFNFADIFISLGTLIFVYKLYFPTKQKIK.

The next 3 helical transmembrane spans lie at 9 to 29 (LLTI…VLLY), 69 to 89 (KYFL…FLFL), and 100 to 120 (FSLI…FFYN). Catalysis depends on residues Asp124 and Asp142. The chain crosses the membrane as a helical span at residues 133–153 (WSFPTFNFADIFISLGTLIFV).

The protein belongs to the peptidase A8 family.

Its subcellular location is the cell inner membrane. It catalyses the reaction Release of signal peptides from bacterial membrane prolipoproteins. Hydrolyzes -Xaa-Yaa-Zaa-|-(S,diacylglyceryl)Cys-, in which Xaa is hydrophobic (preferably Leu), and Yaa (Ala or Ser) and Zaa (Gly or Ala) have small, neutral side chains.. It functions in the pathway protein modification; lipoprotein biosynthesis (signal peptide cleavage). This protein specifically catalyzes the removal of signal peptides from prolipoproteins. This chain is Lipoprotein signal peptidase, found in Chlamydia felis (strain Fe/C-56) (Chlamydophila felis).